We begin with the raw amino-acid sequence, 726 residues long: Catalase-peroxidase (726 aa).

The tract at residues 1-33 is disordered; it reads MSTSDDIHNTTATGKCPFHQGGHDQSAGAGTTT. Residues 105-226 constitute a cross-link (tryptophyl-tyrosyl-methioninium (Trp-Tyr) (with M-252)); the sequence is WHGAGTYRSI…LGATEMGLIY (122 aa). H106 functions as the Proton acceptor in the catalytic mechanism. Positions 226 to 252 form a cross-link, tryptophyl-tyrosyl-methioninium (Tyr-Met) (with W-105); that stretch reads YVNPEGPDHSGEPLSAAAAIRATFGNM. H267 contacts heme b.

The protein belongs to the peroxidase family. Peroxidase/catalase subfamily. In terms of assembly, homodimer or homotetramer. It depends on heme b as a cofactor. In terms of processing, formation of the three residue Trp-Tyr-Met cross-link is important for the catalase, but not the peroxidase activity of the enzyme.

The catalysed reaction is H2O2 + AH2 = A + 2 H2O. It catalyses the reaction 2 H2O2 = O2 + 2 H2O. Bifunctional enzyme with both catalase and broad-spectrum peroxidase activity. In Shigella sonnei (strain Ss046), this protein is Catalase-peroxidase.